The chain runs to 208 residues: Imidazoleglycerol-phosphate dehydratase (208 aa).

Residues 1-22 (MTRRAAVKAPRAGAAARRGSVA) form a disordered region. Over residues 7 to 19 (VKAPRAGAAARRG) the composition is skewed to low complexity.

Belongs to the imidazoleglycerol-phosphate dehydratase family.

The protein resides in the cytoplasm. It catalyses the reaction D-erythro-1-(imidazol-4-yl)glycerol 3-phosphate = 3-(imidazol-4-yl)-2-oxopropyl phosphate + H2O. The protein operates within amino-acid biosynthesis; L-histidine biosynthesis; L-histidine from 5-phospho-alpha-D-ribose 1-diphosphate: step 6/9. This chain is Imidazoleglycerol-phosphate dehydratase, found in Anaeromyxobacter dehalogenans (strain 2CP-C).